Reading from the N-terminus, the 382-residue chain is D-galactonate dehydratase (382 aa).

Position 183 (Asp-183) interacts with Mg(2+). The active-site Proton donor is His-185. 2 residues coordinate Mg(2+): Glu-209 and Glu-235. His-285 (proton acceptor) is an active-site residue.

The protein belongs to the mandelate racemase/muconate lactonizing enzyme family. GalD subfamily. Requires Mg(2+) as cofactor.

The enzyme catalyses D-galactonate = 2-dehydro-3-deoxy-D-galactonate + H2O. Its pathway is carbohydrate acid metabolism; D-galactonate degradation; D-glyceraldehyde 3-phosphate and pyruvate from D-galactonate: step 1/3. Catalyzes the dehydration of D-galactonate to 2-keto-3-deoxy-D-galactonate. The chain is D-galactonate dehydratase from Escherichia fergusonii (strain ATCC 35469 / DSM 13698 / CCUG 18766 / IAM 14443 / JCM 21226 / LMG 7866 / NBRC 102419 / NCTC 12128 / CDC 0568-73).